Consider the following 502-residue polypeptide: Cytochrome c-552 (502 aa).

The first 25 residues, 1–25 (MKYLTKSRVIATIAMLGCLSVSAWA), serve as a signal peptide directing secretion. Residue histidine 105 coordinates heme c. Heme-binding residues include cysteine 133, cysteine 136, and lysine 137. The heme c site is built by cysteine 171, cysteine 174, histidine 175, cysteine 220, cysteine 223, and histidine 224. 4 residues coordinate Ca(2+): glutamate 226, tyrosine 227, lysine 271, and glutamine 273. A substrate-binding site is contributed by tyrosine 227. Histidine 274 lines the substrate pocket. Heme c-binding residues include histidine 285, cysteine 292, cysteine 295, histidine 296, histidine 311, cysteine 324, cysteine 327, histidine 328, and histidine 403. Residues 481–502 (RERGLLPEVTPKSVTTPKVDAK) are disordered.

This sequence belongs to the cytochrome c-552 family. Ca(2+) is required as a cofactor. Heme c serves as cofactor.

It localises to the periplasm. It carries out the reaction 6 Fe(III)-[cytochrome c] + NH4(+) + 2 H2O = 6 Fe(II)-[cytochrome c] + nitrite + 8 H(+). It participates in nitrogen metabolism; nitrate reduction (assimilation). Functionally, catalyzes the reduction of nitrite to ammonia, consuming six electrons in the process. This is Cytochrome c-552 from Haemophilus ducreyi (strain 35000HP / ATCC 700724).